The chain runs to 158 residues: Transcription elongation factor GreA (158 aa).

Residues 47–68 (AEYDAAKEAQGLLELKIKKMEE) are a coiled coil.

Belongs to the GreA/GreB family.

Its function is as follows. Necessary for efficient RNA polymerase transcription elongation past template-encoded arresting sites. The arresting sites in DNA have the property of trapping a certain fraction of elongating RNA polymerases that pass through, resulting in locked ternary complexes. Cleavage of the nascent transcript by cleavage factors such as GreA or GreB allows the resumption of elongation from the new 3'terminus. GreA releases sequences of 2 to 3 nucleotides. The chain is Transcription elongation factor GreA from Flavobacterium psychrophilum (strain ATCC 49511 / DSM 21280 / CIP 103535 / JIP02/86).